We begin with the raw amino-acid sequence, 195 residues long: dITP/XTP pyrophosphatase (195 aa).

Residue 9–14 (TNNQGK) coordinates substrate. Residues Glu39 and Asp68 each contribute to the Mg(2+) site. Catalysis depends on Asp68, which acts as the Proton acceptor. Substrate-binding positions include Ser69, 146–149 (FGYD), Lys169, and 174–175 (HR).

This sequence belongs to the HAM1 NTPase family. Homodimer. Mg(2+) is required as a cofactor.

The catalysed reaction is XTP + H2O = XMP + diphosphate + H(+). It carries out the reaction dITP + H2O = dIMP + diphosphate + H(+). The enzyme catalyses ITP + H2O = IMP + diphosphate + H(+). Pyrophosphatase that catalyzes the hydrolysis of nucleoside triphosphates to their monophosphate derivatives, with a high preference for the non-canonical purine nucleotides XTP (xanthosine triphosphate), dITP (deoxyinosine triphosphate) and ITP. Seems to function as a house-cleaning enzyme that removes non-canonical purine nucleotides from the nucleotide pool, thus preventing their incorporation into DNA/RNA and avoiding chromosomal lesions. The sequence is that of dITP/XTP pyrophosphatase from Gloeobacter violaceus (strain ATCC 29082 / PCC 7421).